We begin with the raw amino-acid sequence, 449 residues long: NADH-quinone oxidoreductase subunit H (449 aa).

The next 9 membrane-spanning stretches (helical) occupy residues tryptophan 23–phenylalanine 43, alanine 93–isoleucine 113, valine 137–glycine 157, methionine 176–serine 196, leucine 209–glutamate 229, alanine 258–leucine 280, tyrosine 300–leucine 320, phenylalanine 332–alanine 352, and leucine 368–alanine 388. Positions arginine 427–threonine 442 are enriched in polar residues. The segment at arginine 427–isoleucine 449 is disordered.

Belongs to the complex I subunit 1 family. In terms of assembly, NDH-1 is composed of 14 different subunits. Subunits NuoA, H, J, K, L, M, N constitute the membrane sector of the complex.

The protein localises to the cell membrane. The catalysed reaction is a quinone + NADH + 5 H(+)(in) = a quinol + NAD(+) + 4 H(+)(out). In terms of biological role, NDH-1 shuttles electrons from NADH, via FMN and iron-sulfur (Fe-S) centers, to quinones in the respiratory chain. The immediate electron acceptor for the enzyme in this species is believed to be ubiquinone. Couples the redox reaction to proton translocation (for every two electrons transferred, four hydrogen ions are translocated across the cytoplasmic membrane), and thus conserves the redox energy in a proton gradient. This subunit may bind ubiquinone. In Nocardioides sp. (strain ATCC BAA-499 / JS614), this protein is NADH-quinone oxidoreductase subunit H.